The chain runs to 293 residues: Protease HtpX (293 aa).

A run of 2 helical transmembrane segments spans residues 4 to 24 (IALF…VLSL) and 34 to 54 (GLMI…LLMS). His-139 is a binding site for Zn(2+). Residue Glu-140 is part of the active site. Zn(2+) is bound at residue His-143. The next 2 helical transmembrane spans lie at 158 to 178 (IVNT…SGFL) and 193 to 213 (MVYF…ASII). Glu-222 is a Zn(2+) binding site.

The protein belongs to the peptidase M48B family. Zn(2+) is required as a cofactor.

The protein resides in the cell inner membrane. In Pectobacterium atrosepticum (strain SCRI 1043 / ATCC BAA-672) (Erwinia carotovora subsp. atroseptica), this protein is Protease HtpX.